The primary structure comprises 721 residues: Sodium/hydrogen exchanger 6 (721 aa).

The segment at M1 to A44 is disordered. The span at E26 to K37 shows a compositional bias: basic and acidic residues. 12 helical membrane-spanning segments follow: residues S91–F111, G123–P143, V196–G216, I231–Y251, C272–H292, V298–L318, I344–V364, M388–I412, F434–F454, F456–G476, N499–I519, and L535–C555.

It belongs to the monovalent cation:proton antiporter 1 (CPA1) transporter (TC 2.A.36) family. In terms of assembly, homodimer. Interacts with RACK1; regulates the distribution of SLC9A6 between endosomes and the plasma membrane. Post-translationally, ubiquitinated (in vitro). Glycosylated.

It localises to the endosome membrane. The protein localises to the recycling endosome membrane. It is found in the early endosome membrane. Its subcellular location is the late endosome membrane. The protein resides in the cell membrane. The catalysed reaction is Na(+)(in) + H(+)(out) = Na(+)(out) + H(+)(in). It catalyses the reaction K(+)(in) + H(+)(out) = K(+)(out) + H(+)(in). In terms of biological role, endosomal Na(+), K(+)/H(+) antiporter. Mediates the electroneutral exchange of endosomal luminal H(+) for a cytosolic Na(+) or K(+). By facilitating proton efflux, SLC9A6 counteracts the acidity generated by vacuolar (V)-ATPase, thereby limiting luminal acidification. Responsible for alkalizing and maintaining the endosomal pH, and consequently in, e.g., endosome maturation and trafficking of recycling endosomal cargo. Plays a critical role during neurodevelopment by regulating synaptic development and plasticity. Implicated in the maintenance of cell polarity in a manner that is dependent on its ability to modulate intravesicular pH. Regulates intracelular pH in some specialized cells, osteoclasts and stereocilia where this transporter localizes to the plasma membrane. This chain is Sodium/hydrogen exchanger 6, found in Rattus norvegicus (Rat).